A 160-amino-acid chain; its full sequence is H/ACA ribonucleoprotein complex subunit 2 (160 aa).

Serine 15 carries the post-translational modification Phosphoserine. Threonine 23 is subject to Phosphothreonine.

This sequence belongs to the eukaryotic ribosomal protein eL8 family. As to quaternary structure, component of the box H/ACA small nucleolar ribonucleoprotein (H/ACA snoRNP) complex consisting of Nop60B, Gar1, NPH2 and Nop10, and associated with H/ACA-type snoRNAs.

It localises to the nucleus. The protein localises to the nucleolus. In terms of biological role, component of the box H/ACA small nucleolar ribonucleoprotein (H/ACA snoRNP) complex, which catalyzes pseudouridylation of rRNA. This involves the isomerization of uridine such that the ribose is subsequently attached to C5, instead of the normal N1. Pseudouridine ('psi') residues may serve to stabilize the conformation of rRNAs. Required for ribosome biogenesis. H/ACA snoRNP complex-dependent ribosome biogenesis is important in female germline cell differentiation during oogenesis. The polypeptide is H/ACA ribonucleoprotein complex subunit 2 (Drosophila melanogaster (Fruit fly)).